Here is a 2004-residue protein sequence, read N- to C-terminus: Immunoglobulin A1 protease (2004 aa).

A signal peptide spans M1–A42. Positions Q43–T99 are excised as a propeptide. An LPXTG sorting signal motif is present at residues L96–G100. T99 carries the post-translational modification Pentaglycyl murein peptidoglycan amidated threonine. 2 helical membrane-spanning segments follow: residues Q106–S125 and K132–L154. The Extracellular segment spans residues E155 to K2004. 4 disordered regions span residues T194 to Q213, Q235 to D305, E373 to T394, and P422 to T720. Composition is skewed to polar residues over residues E197–Q213 and Q235–T246. The segment covering L276–T296 has biased composition (basic and acidic residues). One can recognise a G5 domain in the interval K314 to K393. Tandem repeats lie at residues A419–P435, E436–T452, and E453–P469. The interval A419 to P469 is 3 X 17 AA approximate tandem repeats. The span at V485 to E511 shows a compositional bias: basic and acidic residues. Composition is skewed to polar residues over residues N516–E529 and E538–E572. Basic and acidic residues predominate over residues N574–E591. Composition is skewed to polar residues over residues E618 to P639 and E648 to G681. Residues N682–N699 are compositionally biased toward low complexity. Positions E700–T720 are enriched in basic and acidic residues. H1645 is a Zn(2+) binding site. Residue E1646 is part of the active site. Zn(2+)-binding residues include H1649 and E1669.

This sequence belongs to the peptidase M26 family. It depends on Zn(2+) as a cofactor. Post-translationally, the Gram-positive cell-wall anchor motif LPXTG is located in the N-terminal part, in contrast to such motifs in other known streptococcal and staphylococcal proteins. The protease could be cleaved by the sortase and anchored in the membrane via the two potential N-terminal transmembrane domains, whereas the propeptide located prior to the LPXTG motif would remain attached to the cell wall peptidoglycan by an amide bond.

It localises to the secreted. Its subcellular location is the cell wall. It is found in the membrane. It catalyses the reaction Cleavage of Pro-|-Thr bond in the hinge region of the heavy chain of human IgA.. Functionally, zinc metalloproteinase which cleaves human immunoglobulin A1 (IgA1) in the hinge region, rendering it less efficient in coating the surface of colonizing or invading pneumococci. Strongly contributes to virulence in mice. May be responsible for pneumococcal infection and is potentially involved in distinct stages of pneumococcal disease. This chain is Immunoglobulin A1 protease (iga), found in Streptococcus pneumoniae serotype 4 (strain ATCC BAA-334 / TIGR4).